Consider the following 258-residue polypeptide: MALIRVLANLLILQLSYAQKSSELVVGGDECNINEHRSLVVLFNSSGLICSGTLINQEWVLTAAHCDSKNFQMLFGVHSKKILNEDEQTRDPKEKFICPNKKKDDEKDKDIMLIRLDSPVSNSEHIAPLSLPSSSPTVDSVCRIMGWGTIKPADETYPDVPHCANINILDHTVCRAAYPVLLAGSSTLCAGTQQGGKDTCVGDSGGPLICNGQIQGIVSWGAHPCGQGSKPGVYTKVFDHLDWIKSIIAGNTAVTCPP.

The signal sequence occupies residues 1-18; the sequence is MALIRVLANLLILQLSYA. Residues 19–24 constitute a propeptide that is removed on maturation; the sequence is QKSSEL. Positions 25–249 constitute a Peptidase S1 domain; sequence VVGGDECNIN…HLDWIKSIIA (225 aa). Cystine bridges form between Cys-31-Cys-163, Cys-50-Cys-66, Cys-98-Cys-256, Cys-142-Cys-210, Cys-174-Cys-189, and Cys-200-Cys-225. N-linked (GlcNAc...) asparagine glycosylation occurs at Asn-44. Catalysis depends on charge relay system residues His-65 and Asp-110. Ser-204 serves as the catalytic Charge relay system.

The protein belongs to the peptidase S1 family. Snake venom subfamily. Monomer. In terms of processing, glycosylated. In terms of tissue distribution, expressed by the venom gland.

The protein localises to the secreted. Functionally, snake venom serine protease that activates plasminogen. Displays indirect fibrino(geno)lytic activity through conversion of plasminogen to plasmin. Shows a preferential cleavage at Arg-|-Xaa instead of Lys-|-Xaa bonds. In Gloydius brevicauda (Korean slamosa snake), this protein is Venom plasminogen activator Haly-PA.